A 166-amino-acid chain; its full sequence is Large ribosomal subunit protein mL49 (166 aa).

The segment at 56 to 78 (RIPDPPKHEHYPTPSGWQPPRDP) is disordered.

This sequence belongs to the mitochondrion-specific ribosomal protein mL49 family. Interacts with OXA1L.

Its subcellular location is the mitochondrion. This chain is Large ribosomal subunit protein mL49 (MRPL49), found in Macaca fascicularis (Crab-eating macaque).